Consider the following 874-residue polypeptide: Alanine--tRNA ligase (874 aa).

Zn(2+)-binding residues include histidine 562, histidine 566, cysteine 664, and histidine 668.

It belongs to the class-II aminoacyl-tRNA synthetase family. Zn(2+) serves as cofactor.

The protein resides in the cytoplasm. It carries out the reaction tRNA(Ala) + L-alanine + ATP = L-alanyl-tRNA(Ala) + AMP + diphosphate. Functionally, catalyzes the attachment of alanine to tRNA(Ala) in a two-step reaction: alanine is first activated by ATP to form Ala-AMP and then transferred to the acceptor end of tRNA(Ala). Also edits incorrectly charged Ser-tRNA(Ala) and Gly-tRNA(Ala) via its editing domain. The protein is Alanine--tRNA ligase of Shewanella sediminis (strain HAW-EB3).